Consider the following 254-residue polypeptide: Protein PET122, mitochondrial (254 aa).

Residues 1-8 constitute a mitochondrion transit peptide; sequence MLTITKRL. Residues 185–254 are essential for PET122 function; sequence QAAALALFGR…IKRRGFEINT (70 aa).

The protein localises to the mitochondrion inner membrane. Required for expression of the mitochondrial gene for cytochrome c oxidase subunit 3 (COX3). PET122 seems to work by directly interacting with the small ribosomal subunit to promote translation initiation on the COX3 mRNA. This Saccharomyces cerevisiae (strain ATCC 204508 / S288c) (Baker's yeast) protein is Protein PET122, mitochondrial (PET122).